The sequence spans 421 residues: Fasciclin-like arabinogalactan protein ARB_02922 (421 aa).

A signal peptide spans 1 to 17; sequence MLLYYILVALWATVTYA. FAS1 domains lie at 18–167 and 169–296; these read KSFS…DRPL and LPQS…SDVL. 8 N-linked (GlcNAc...) asparagine glycosylation sites follow: Asn-52, Asn-75, Asn-80, Asn-120, Asn-145, Asn-181, Asn-223, and Asn-300. The tract at residues 300–401 is disordered; sequence NDTAKPVPNA…NTPQPGAAAT (102 aa). Composition is skewed to gly residues over residues 344–356 and 372–387; these read TSGG…GGGE and SGGG…GGPG. Low complexity predominate over residues 388–401; the sequence is PTATNTPQPGAAAT. Gly-397 is lipidated: GPI-anchor amidated glycine. Residues 398 to 421 constitute a propeptide, removed in mature form; the sequence is AAATERAKAGLAAVVGLGVVLINA.

It belongs to the fasciclin-like AGP family.

The protein localises to the cell membrane. Functionally, may be a cell surface adhesion protein. The polypeptide is Fasciclin-like arabinogalactan protein ARB_02922 (Arthroderma benhamiae (strain ATCC MYA-4681 / CBS 112371) (Trichophyton mentagrophytes)).